We begin with the raw amino-acid sequence, 396 residues long: L-lactate dehydrogenase (396 aa).

The FMN hydroxy acid dehydrogenase domain occupies 1–380 (MIISAASDYR…TQDSLVQGLG (380 aa)). Residue tyrosine 24 coordinates substrate. The FMN site is built by serine 106 and glutamine 127. Tyrosine 129 provides a ligand contact to substrate. An FMN-binding site is contributed by threonine 155. Substrate is bound at residue arginine 164. Lysine 251 serves as a coordination point for FMN. Histidine 275 acts as the Proton acceptor in catalysis. Arginine 278 serves as a coordination point for substrate. 306-330 (DSGIRNGLDVVRMIALGADTVLLGR) is an FMN binding site.

It belongs to the FMN-dependent alpha-hydroxy acid dehydrogenase family. FMN is required as a cofactor.

The protein resides in the cell inner membrane. It catalyses the reaction (S)-lactate + A = pyruvate + AH2. Functionally, catalyzes the conversion of L-lactate to pyruvate. Is coupled to the respiratory chain. The protein is L-lactate dehydrogenase of Shigella dysenteriae serotype 1 (strain Sd197).